Consider the following 246-residue polypeptide: tRNA (guanine-N(1)-)-methyltransferase (246 aa).

S-adenosyl-L-methionine is bound by residues Gly-113 and 132 to 137 (LGDFVV).

It belongs to the RNA methyltransferase TrmD family. Homodimer.

Its subcellular location is the cytoplasm. The enzyme catalyses guanosine(37) in tRNA + S-adenosyl-L-methionine = N(1)-methylguanosine(37) in tRNA + S-adenosyl-L-homocysteine + H(+). Specifically methylates guanosine-37 in various tRNAs. This is tRNA (guanine-N(1)-)-methyltransferase from Latilactobacillus sakei subsp. sakei (strain 23K) (Lactobacillus sakei subsp. sakei).